The chain runs to 276 residues: NADPH-dependent 7-cyano-7-deazaguanine reductase (276 aa).

80-82 (IES) contacts substrate. 82 to 83 (SK) provides a ligand contact to NADPH. Cys-178 (thioimide intermediate) is an active-site residue. The Proton donor role is filled by Asp-185. Position 217 to 218 (217 to 218 (HE)) interacts with substrate. 246-247 (RG) is an NADPH binding site.

It belongs to the GTP cyclohydrolase I family. QueF type 2 subfamily. In terms of assembly, homodimer.

It localises to the cytoplasm. The catalysed reaction is 7-aminomethyl-7-carbaguanine + 2 NADP(+) = 7-cyano-7-deazaguanine + 2 NADPH + 3 H(+). It participates in tRNA modification; tRNA-queuosine biosynthesis. In terms of biological role, catalyzes the NADPH-dependent reduction of 7-cyano-7-deazaguanine (preQ0) to 7-aminomethyl-7-deazaguanine (preQ1). This Teredinibacter turnerae (strain ATCC 39867 / T7901) protein is NADPH-dependent 7-cyano-7-deazaguanine reductase.